Reading from the N-terminus, the 577-residue chain is Nuclear receptor subfamily 4 group A member 1 (577 aa).

Positions 243-318 (EGRCAVCGDN…VGMVKEVVRT (76 aa)) form a DNA-binding region, nuclear receptor. 2 consecutive NR C4-type zinc fingers follow at residues 246–266 (CAVC…CEGC) and 282–311 (CLAN…VVGM). A required for binding NBRE-containing DNA region spans residues 247–333 (AVCGDNASCQ…RRGRLPSKPK (87 aa)). Positions 339–574 (SPVDLINSLV…PIVDKIFMDT (236 aa)) constitute an NR LBD domain. The may bind lipopolysaccharide stretch occupies residues 500–523 (PKKVEELQSQIINCLKEHIPSSMN). Residues 563-574 (PPPIVDKIFMDT) are AF-2.

It belongs to the nuclear hormone receptor family. NR4 subfamily. Requires Zn(2+) as cofactor.

Its subcellular location is the nucleus. It is found in the cytoplasm. The protein localises to the cytosol. In terms of biological role, orphan nuclear receptor. Binds the NGFI-B response element (NBRE) 5'-AAAAGGTCA-3'. Its function is as follows. In the cytosol, may detect bacterial lipopolysaccharide (LPS) and NBRE-containing mitochondrial DNA released during pyroptosis, and play a role in non-canonical inflammasome activation. The chain is Nuclear receptor subfamily 4 group A member 1 (nr4a1) from Xenopus laevis (African clawed frog).